The following is a 366-amino-acid chain: Mitochondrial substrate carrier family protein H (366 aa).

A compositionally biased stretch (low complexity) spans 1–25; it reads MLSNSVNNNNNNNNINNSNSNNNDS. Residues 1-26 form a disordered region; the sequence is MLSNSVNNNNNNNNINNSNSNNNDSN. 3 Solcar repeats span residues 29–121, 132–243, and 259–360; these read KNVK…LKEY, NIYT…LKNK, and SPFF…IKQS. 6 helical membrane-spanning segments follow: residues 35–55, 96–112, 133–151, 175–192, 262–282, and 340–357; these read MVAS…LDVV, GVTP…TIYF, IYTV…SASV, VAMA…IPLS, FINF…TTPI, and VAKV…FEYI.

This sequence belongs to the mitochondrial carrier (TC 2.A.29) family.

The protein localises to the mitochondrion inner membrane. Mitochondrial transporter required for glutathione import into mitochondria. This Dictyostelium discoideum (Social amoeba) protein is Mitochondrial substrate carrier family protein H.